Consider the following 2896-residue polypeptide: 3'-5' exoribonuclease HELZ2 (2896 aa).

C3H1-type zinc fingers lie at residues 90–114 and 217–246; these read VCHY…RSRE and GQPP…HSAV. The C2H2-type; atypical zinc-finger motif lies at 287-311; the sequence is LYCPACLVTCHSQEAFENHCASSEH. The segment at 327 to 357 adopts a C3H1-type 3 zinc-finger fold; sequence SPPPGLSKFELCPKPDLCEYGDACTKAHSAQ. The region spanning 770 to 1126 is the UvrD-like helicase ATP-binding domain; it reads VALIAGWGPG…VVLSTVHTCQ (357 aa). 791-798 is a binding site for ATP; the sequence is GPFGTGKT. The tract at residues 810-1306 is interaction with THRAP3; the sequence is RRPETKVLIC…ESTEAEDAEA (497 aa). Residues 914–917 carry the DEAA box motif; that stretch reads DEAA. Ser1253 carries the post-translational modification Phosphoserine. 3 consecutive short sequence motifs (LXXLL motif) follow at residues 1322 to 1326, 1365 to 1369, and 1420 to 1424; these read LRELL, LRKLL, and LVQLL. An RNB domain is found at 1581 to 1938; sequence REDCRAFLTF…VLQRQILLAL (358 aa). The LXXLL motif 4 motif lies at 2259-2263; that stretch reads LEGLP. Residues 2382-2896 are interaction with THRAP3; it reads PSRFLERQTY…RVCRRPTMPS (515 aa). One can recognise a UvrD-like helicase ATP-binding 2 domain in the interval 2400 to 2675; that stretch reads LNPSQNVAVR…HMLDTQYRMH (276 aa). 2421–2428 is an ATP binding site; that stretch reads GPPGTGKT. The short motif at 2476–2480 is the LXXLL motif 5 element; it reads LAGLL.

The protein belongs to the DNA2/NAM7 helicase family. In terms of assembly, interacts with PPARA (via DNA-binding domain) and PPARG; the interaction stimulates the transcriptional activity of PPARA and PPARG. Interacts with THRAP3; the interaction is direct and HELZ2 and THRAP3 synergistically enhance the transcriptional activity of PPARG. It is probably part of the peroxisome proliferator activated receptor alpha interacting complex (PRIC). In terms of tissue distribution, expressed in various tissues including heart, pancreas, skeletal muscle, colon, spleen, liver, kidney, lung, peripheral blood and placenta.

It localises to the cytoplasm. The enzyme catalyses Exonucleolytic cleavage in the 3'- to 5'-direction to yield nucleoside 5'-phosphates.. The catalysed reaction is ATP + H2O = ADP + phosphate + H(+). In terms of biological role, can degrade highly structured RNAs through its concerted ATP-dependent RNA helicase and 3' to 5' exoribonuclease activities. Shows a strong preference for pyrimidine over purine residues for its nuclease activity. Acts as a transcriptional coactivator for a number of nuclear receptors including PPARA, PPARG, THRA, THRB and RXRA. In Homo sapiens (Human), this protein is 3'-5' exoribonuclease HELZ2.